The sequence spans 732 residues: Acylamino-acid-releasing enzyme (732 aa).

M1 is modified (N-acetylmethionine). 2 positions are modified to phosphoserine: S185 and S187. Residues S587, D675, and H707 each act as charge relay system in the active site.

This sequence belongs to the peptidase S9C family. Homotetramer.

It localises to the cytoplasm. The enzyme catalyses Cleavage of an N-acetyl or N-formyl amino acid from the N-terminus of a polypeptide.. Its activity is regulated as follows. Homotetramerization is required for activity. Tetramerization results in the formation of a gated channel which is involved in substrate selection and substrate access to the catalytic sites. In terms of biological role, this enzyme catalyzes the hydrolysis of the N-terminal peptide bond of an N-acetylated peptide to generate an N-acetylated amino acid and a peptide with a free N-terminus. It preferentially cleaves off Ac-Ala, Ac-Met and Ac-Ser. Also, involved in the degradation of oxidized and glycated proteins. In Mus musculus (Mouse), this protein is Acylamino-acid-releasing enzyme (Apeh).